Reading from the N-terminus, the 496-residue chain is Xylulose kinase (496 aa).

83 to 84 (MH) is a substrate binding site. Asp-237 functions as the Proton acceptor in the catalytic mechanism.

The protein belongs to the FGGY kinase family.

The catalysed reaction is D-xylulose + ATP = D-xylulose 5-phosphate + ADP + H(+). In terms of biological role, catalyzes the phosphorylation of D-xylulose to D-xylulose 5-phosphate. The polypeptide is Xylulose kinase (Staphylococcus epidermidis (strain ATCC 35984 / DSM 28319 / BCRC 17069 / CCUG 31568 / BM 3577 / RP62A)).